We begin with the raw amino-acid sequence, 349 residues long: tRNA pseudouridine synthase D (349 aa).

F27 provides a ligand contact to substrate. D80 acts as the Nucleophile in catalysis. N129 is a substrate binding site. A TRUD domain is found at 155-303 (GVPNYFGAQR…VEASRRAMLL (149 aa)). A substrate-binding site is contributed by F329.

This sequence belongs to the pseudouridine synthase TruD family.

It catalyses the reaction uridine(13) in tRNA = pseudouridine(13) in tRNA. Responsible for synthesis of pseudouridine from uracil-13 in transfer RNAs. This chain is tRNA pseudouridine synthase D, found in Salmonella choleraesuis (strain SC-B67).